An 84-amino-acid polypeptide reads, in one-letter code: Toxin BmKaTx13 (84 aa).

A signal peptide spans 1-19; that stretch reads MNYLVMISFALLLMKGVES. The 63-residue stretch at 21–83 folds into the LCN-type CS-alpha/beta domain; that stretch reads RDAYIAKPEN…VPIRVPGKCH (63 aa). 4 cysteine pairs are disulfide-bonded: Cys-31–Cys-82, Cys-35–Cys-55, Cys-41–Cys-65, and Cys-45–Cys-67. A propeptide (removed by a carboxypeptidase) is located at residue Arg-84.

The protein belongs to the long (4 C-C) scorpion toxin superfamily. Sodium channel inhibitor family. Alpha subfamily. In terms of tissue distribution, expressed by the venom gland.

It is found in the secreted. In terms of biological role, alpha toxins bind voltage-independently at site-3 of sodium channels (Nav) and inhibit the inactivation of the activated channels, thereby blocking neuronal transmission. This toxin is active against mammals. This Olivierus martensii (Manchurian scorpion) protein is Toxin BmKaTx13.